A 322-amino-acid chain; its full sequence is 4-hydroxythreonine-4-phosphate dehydrogenase (322 aa).

Substrate is bound at residue threonine 132. Histidine 160, histidine 205, and histidine 260 together coordinate a divalent metal cation. Substrate is bound by residues lysine 268, asparagine 277, and arginine 286.

It belongs to the PdxA family. In terms of assembly, homodimer. Requires Zn(2+) as cofactor. Mg(2+) serves as cofactor. Co(2+) is required as a cofactor.

It is found in the cytoplasm. It carries out the reaction 4-(phosphooxy)-L-threonine + NAD(+) = 3-amino-2-oxopropyl phosphate + CO2 + NADH. Its pathway is cofactor biosynthesis; pyridoxine 5'-phosphate biosynthesis; pyridoxine 5'-phosphate from D-erythrose 4-phosphate: step 4/5. Functionally, catalyzes the NAD(P)-dependent oxidation of 4-(phosphooxy)-L-threonine (HTP) into 2-amino-3-oxo-4-(phosphooxy)butyric acid which spontaneously decarboxylates to form 3-amino-2-oxopropyl phosphate (AHAP). The sequence is that of 4-hydroxythreonine-4-phosphate dehydrogenase from Xanthomonas oryzae pv. oryzae (strain PXO99A).